The sequence spans 1010 residues: Protein CROWDED NUCLEI 4 (1010 aa).

Coiled coils occupy residues 82 to 350 (LLLL…LIQN) and 404 to 763 (EKEH…NLER). 2 consecutive short sequence motifs (nuclear localization signal) follow at residues 445–452 (NRKTTMLE) and 679–686 (LKRLDAER). Disordered regions lie at residues 787-813 (GVST…PSSA), 839-937 (HYEE…TQTP), and 966-994 (DCSE…GINA). The span at 849 to 863 (EKLKLESSRREEKAY) shows a compositional bias: basic and acidic residues. Polar residues-rich tracts occupy residues 883 to 893 (NTSGDETSEPS) and 912 to 921 (TQSVISSPQN).

It belongs to the CRWN family. Core component of the LINC complex which is composed of inner nuclear membrane SUN domain-containing proteins coupled to outer nuclear membrane WIP proteins, the nucleoskeletal CRWN/LINC proteins, and, possibly, KAKU4. Binds to KAKU4. Expressed at low levels in roots, leaves, flowers and flower stalks.

The protein resides in the nucleus membrane. The protein localises to the nucleus. It localises to the nucleoplasm. Its subcellular location is the nucleus lamina. It is found in the cytoplasm. In terms of biological role, component of SUN-protein-containing multivariate complexes also called LINC complexes which link the nucleoskeleton and cytoskeleton by providing versatile outer nuclear membrane attachment sites for cytoskeletal filaments. Required for nucleus structure organization (e.g. size and shape). Involved in the maintenance of interphase chromocenter integrity and organization. This chain is Protein CROWDED NUCLEI 4, found in Arabidopsis thaliana (Mouse-ear cress).